Reading from the N-terminus, the 724-residue chain is Catalase-peroxidase (724 aa).

Positions 98 to 226 (WHSAGTYRIA…LAAVMMGLIY (129 aa)) form a cross-link, tryptophyl-tyrosyl-methioninium (Trp-Tyr) (with M-252). The active-site Proton acceptor is His-99. Residues 226–252 (YVNPEGVDGNPDPLKTAQDMRVTFARM) constitute a cross-link (tryptophyl-tyrosyl-methioninium (Tyr-Met) (with W-98)). His-267 is a binding site for heme b.

Belongs to the peroxidase family. Peroxidase/catalase subfamily. In terms of assembly, homodimer or homotetramer. Heme b serves as cofactor. Formation of the three residue Trp-Tyr-Met cross-link is important for the catalase, but not the peroxidase activity of the enzyme.

It carries out the reaction H2O2 + AH2 = A + 2 H2O. The catalysed reaction is 2 H2O2 = O2 + 2 H2O. Functionally, bifunctional enzyme with both catalase and broad-spectrum peroxidase activity. In Vibrio cholerae serotype O1 (strain ATCC 39315 / El Tor Inaba N16961), this protein is Catalase-peroxidase.